We begin with the raw amino-acid sequence, 663 residues long: RING finger protein 145 (663 aa).

The next 14 membrane-spanning stretches (helical) occupy residues 53–73 (YLAL…LTLP), 77–97 (LVQL…HQIS), 123–143 (FTTA…VMKT), 146–166 (IWLF…VPLE), 168–188 (IVII…YFLG), 205–222 (LVQV…MSLW), 225–245 (LVVP…QIYS), 275–295 (YSLL…LTLC), 316–336 (TEGV…LQVV), 340–360 (FLLS…MLEI), 384–404 (SLCL…CQFF), 410–430 (LLII…TLFI), 460–480 (LLEF…TIFG), and 482–502 (WTVM…WLRA). Positions 81–84 (YLYF) match the YLYF motif motif. Cysteine 537 is a catalytic residue. The RING-type; atypical zinc finger occupies 537 to 575 (CAICYQDMKSAVITPCSHFFHAGCLKKWLYVQETCPLCH). The segment at 607 to 663 (EGTEPPGQEHTPGTRIQEGSRDNNEYIARRPDNQEGAFDPKEYPHSAKDEAHPVESA) is disordered. The segment covering 624-663 (EGSRDNNEYIARRPDNQEGAFDPKEYPHSAKDEAHPVESA) has biased composition (basic and acidic residues).

As to quaternary structure, interacts (via YLYF motif) with INSIG1 and INSIG2.

It is found in the endoplasmic reticulum membrane. The enzyme catalyses S-ubiquitinyl-[E2 ubiquitin-conjugating enzyme]-L-cysteine + [acceptor protein]-L-lysine = [E2 ubiquitin-conjugating enzyme]-L-cysteine + N(6)-ubiquitinyl-[acceptor protein]-L-lysine.. E3 ubiquitin ligase that catalyzes the direct transfer of ubiquitin from E2 ubiquitin-conjugating enzyme to a specific substrate. In response to bacterial infection, negatively regulates the phagocyte oxidative burst by controlling the turnover of the NADPH oxidase complex subunits. Promotes monoubiquitination of CYBA and 'Lys-48'-linked polyubiquitination and degradation of CYBB NADPH oxidase catalytic subunits, both essential for the generation of antimicrobial reactive oxygen species. Involved in the maintenance of cholesterol homeostasis. In response to high sterol concentrations ubiquitinates HMGCR, a rate-limiting enzyme in cholesterol biosynthesis, and targets it for degradation. The interaction with INSIG1 is required for this function. In addition, triggers ubiquitination of SCAP, likely inhibiting its transport to the Golgi apparatus and the subsequent processing/maturation of SREBPF2, ultimately down-regulating cholesterol biosynthesis. The polypeptide is RING finger protein 145 (Homo sapiens (Human)).